Consider the following 367-residue polypeptide: Protein-glutamate methylesterase/protein-glutamine glutaminase 1 (367 aa).

The region spanning 9 to 126 (KVLCVDDSAL…RDGMLDYSEK (118 aa)) is the Response regulatory domain. At Asp-60 the chain carries 4-aspartylphosphate. The CheB-type methylesterase domain maps to 168–360 (LVSTEKLIIV…RRIMARLASM (193 aa)). Active-site residues include Ser-180, His-206, and Asp-302.

This sequence belongs to the CheB family. Phosphorylated by CheA. Phosphorylation of the N-terminal regulatory domain activates the methylesterase activity.

It is found in the cytoplasm. The catalysed reaction is [protein]-L-glutamate 5-O-methyl ester + H2O = L-glutamyl-[protein] + methanol + H(+). It catalyses the reaction L-glutaminyl-[protein] + H2O = L-glutamyl-[protein] + NH4(+). Involved in chemotaxis. Part of a chemotaxis signal transduction system that modulates chemotaxis in response to various stimuli. Catalyzes the demethylation of specific methylglutamate residues introduced into the chemoreceptors (methyl-accepting chemotaxis proteins or MCP) by CheR. Also mediates the irreversible deamidation of specific glutamine residues to glutamic acid. In Burkholderia pseudomallei (strain K96243), this protein is Protein-glutamate methylesterase/protein-glutamine glutaminase 1.